A 94-amino-acid chain; its full sequence is Large ribosomal subunit protein bL31 (94 aa).

Residues 65–94 (YGMADSENDSTDKKKTTNEKKVSDSPSKES) form a disordered region. Positions 74–94 (STDKKKTTNEKKVSDSPSKES) are enriched in basic and acidic residues.

It belongs to the bacterial ribosomal protein bL31 family. Type A subfamily. Part of the 50S ribosomal subunit.

Its function is as follows. Binds the 23S rRNA. This is Large ribosomal subunit protein bL31 from Prochlorococcus marinus (strain MIT 9211).